A 95-amino-acid chain; its full sequence is MKLLMVLMLAALLLHCYADSGCKLLEDMVEKTINSDISIPEYKELLQEFIDSDAAAEAMGKFKQCFLNQSHRTLKNFGLMMHTVYDSIWCNMKSN.

The N-terminal stretch at 1 to 18 (MKLLMVLMLAALLLHCYA) is a signal peptide. Asn68 is a glycosylation site (N-linked (GlcNAc...) asparagine).

As to quaternary structure, heterodimer of a lipophilin A and a lipophilin C (mammaglobin B) monomer associated head to head. Expressed in thymus, trachea, kidney, steroid responsive tissues (prostate, testis, uterus, breast and ovary) and salivary gland.

The protein localises to the secreted. Its function is as follows. May bind androgens and other steroids, may also bind estramustine, a chemotherapeutic agent used for prostate cancer. May be under transcriptional regulation of steroid hormones. This Homo sapiens (Human) protein is Mammaglobin-B (SCGB2A1).